The sequence spans 316 residues: tRNA pseudouridine synthase B (316 aa).

The Nucleophile role is filled by Asp-38. Residues 238 to 312 (YPEVIVKSSA…PVCVLARQAG (75 aa)) enclose the PUA domain.

The protein belongs to the pseudouridine synthase TruB family. Type 1 subfamily.

It catalyses the reaction uridine(55) in tRNA = pseudouridine(55) in tRNA. Functionally, responsible for synthesis of pseudouridine from uracil-55 in the psi GC loop of transfer RNAs. The chain is tRNA pseudouridine synthase B from Pelotomaculum thermopropionicum (strain DSM 13744 / JCM 10971 / SI).